We begin with the raw amino-acid sequence, 130 residues long: Fumarate reductase subunit C (130 aa).

Transmembrane regions (helical) follow at residues 37–57 (VWFS…PAGW), 60–80 (FVGF…LLAA), and 109–129 (VIKA…AVAL).

This sequence belongs to the FrdC family. In terms of assembly, part of an enzyme complex containing four subunits: a flavoprotein (FrdA), an iron-sulfur protein (FrdB), and two hydrophobic anchor proteins (FrdC and FrdD).

Its subcellular location is the cell inner membrane. Its function is as follows. Two distinct, membrane-bound, FAD-containing enzymes are responsible for the catalysis of fumarate and succinate interconversion; fumarate reductase is used in anaerobic growth, and succinate dehydrogenase is used in aerobic growth. Anchors the catalytic components of the fumarate reductase complex to the cell inner membrane, binds quinones. The sequence is that of Fumarate reductase subunit C from Yersinia enterocolitica serotype O:8 / biotype 1B (strain NCTC 13174 / 8081).